The following is a 270-amino-acid chain: L-cystine-binding protein TcyK (270 aa).

An N-terminal signal peptide occupies residues 1–20 (MKTKTAFMAILFSLITVLSA). Cysteine 21 carries the N-palmitoyl cysteine lipid modification. Cysteine 21 carries the S-diacylglycerol cysteine lipid modification.

Belongs to the bacterial solute-binding protein 3 family. The complex is composed of two ATP-binding proteins (TcyN), two transmembrane proteins (TcyL and TcyM) and two solute-binding proteins (TcyJ and TcyK).

The protein resides in the cell membrane. Functionally, part of the ABC transporter complex TcyJKLMN involved in L-cystine import. Is also involved in cystathionine, djenkolate, and S-methylcysteine transport. The polypeptide is L-cystine-binding protein TcyK (tcyK) (Bacillus subtilis (strain 168)).